The following is a 324-amino-acid chain: Elongation factor P--(R)-beta-lysine ligase (324 aa).

Serine 75–glutamate 77 lines the substrate pocket. Residues arginine 99–lysine 101 and asparagine 108 each bind ATP. Tyrosine 117 contributes to the substrate binding site. Glutamate 243–leucine 244 is a binding site for ATP. Glutamate 250 lines the substrate pocket. Residue glycine 299 coordinates ATP.

It belongs to the class-II aminoacyl-tRNA synthetase family. EpmA subfamily. In terms of assembly, homodimer.

It catalyses the reaction D-beta-lysine + L-lysyl-[protein] + ATP = N(6)-((3R)-3,6-diaminohexanoyl)-L-lysyl-[protein] + AMP + diphosphate + H(+). In terms of biological role, with EpmB is involved in the beta-lysylation step of the post-translational modification of translation elongation factor P (EF-P). Catalyzes the ATP-dependent activation of (R)-beta-lysine produced by EpmB, forming a lysyl-adenylate, from which the beta-lysyl moiety is then transferred to the epsilon-amino group of a conserved specific lysine residue in EF-P. The chain is Elongation factor P--(R)-beta-lysine ligase from Buchnera aphidicola subsp. Acyrthosiphon pisum (strain 5A).